A 464-amino-acid chain; its full sequence is C-terminal processing peptidase, chloroplastic (464 aa).

The N-terminal 32 residues, 1–32 (MHSRTNCLQTSVRAPQPHFRPFTAVKTCRQRC), are a transit peptide targeting the chloroplast. The N-terminal 45 residues, 33–77 (STTAAAAKRDQAQEQQPWIQVGLGLAAAATAVAVGLGAAALPAQA), are a transit peptide targeting the thylakoid. Residues 149–234 (LAALRRGTAG…SQVEVVLHAP (86 aa)) form the PDZ domain. Catalysis depends on charge relay system residues Ser372 and Lys397.

The protein belongs to the peptidase S41A family. As to quaternary structure, monomer.

The protein resides in the plastid. Its subcellular location is the chloroplast thylakoid lumen. It carries out the reaction The enzyme shows specific recognition of a C-terminal tripeptide, Xaa-Yaa-Zaa, in which Xaa is preferably Ala or Leu, Yaa is preferably Ala or Tyr, and Zaa is preferably Ala, but then cleaves at a variable distance from the C-terminus. A typical cleavage is -Ala-Ala-|-Arg-Ala-Ala-Lys-Glu-Asn-Tyr-Ala-Leu-Ala-Ala.. With respect to regulation, not inhibited by antipain, 4-amidinophenylmethanesulfonyl fluoride, aprotinin, chymostatin, 3,4-dichloroisocoumarin, diisopropyl fluorophosphate, E64, EDTA, EGTA, iodoacetamide, leupeptin, pepstatin, o-phenanthroline, N-ethylmaleimide, phosphoramidon or phenylmethylsulfonyl fluoride. In terms of biological role, protease involved in the C-terminal processing of the chloroplastic D1 protein of photosystem II. This proteolytic processing is necessary to allow the light-driven assembly of the tetranuclear manganese cluster, which is responsible for photosynthetic water oxidation. In Tetradesmus obliquus (Green alga), this protein is C-terminal processing peptidase, chloroplastic (ctpA).